Consider the following 321-residue polypeptide: L-Ala-D/L-Glu epimerase (321 aa).

Residues T124 and K149 each contribute to the substrate site. Residue K151 is the Proton acceptor; specific for (R)-substrate epimerization of the active site. Mg(2+)-binding residues include D176, E202, and D225. The Proton acceptor; specific for (S)-substrate epimerization role is filled by K247. Residues C275, D297, and D299 each coordinate substrate.

This sequence belongs to the mandelate racemase/muconate lactonizing enzyme family. In terms of assembly, monomer. Requires Mg(2+) as cofactor.

The catalysed reaction is L-alanyl-L-glutamate = L-alanyl-D-glutamate. It participates in cell wall biogenesis; peptidoglycan recycling. In terms of biological role, catalyzes the epimerization of L-Ala-D-Glu to L-Ala-L-Glu and has a role in the recycling of the murein peptide, of which L-Ala-D-Glu is a component. Is also able to catalyze the reverse reaction and the epimerization of all the L-Ala-X dipeptides, except L-Ala-L-Arg, L-Ala-L-Lys and L-Ala-L-Pro. Is also active with L-Gly-L-Glu, L-Phe-L-Glu, and L-Ser-L-Glu, but not with L-Glu-L-Glu, L-Lys-L-Glu, L-Pro-L-Glu, L-Lys-L-Ala, or D-Ala-D-Ala. The sequence is that of L-Ala-D/L-Glu epimerase (ycjG) from Escherichia coli (strain K12).